The following is a 461-amino-acid chain: Alcaligin biosynthesis enzyme (461 aa).

FAD is bound at residue V9 to P15.

Belongs to the lysine N(6)-hydroxylase/L-ornithine N(5)-oxygenase family. The cofactor is FAD.

Its pathway is siderophore biosynthesis; alcaligin biosynthesis. This is Alcaligin biosynthesis enzyme (alcA) from Bordetella bronchiseptica (strain ATCC BAA-588 / NCTC 13252 / RB50) (Alcaligenes bronchisepticus).